A 366-amino-acid chain; its full sequence is ERCC4 domain-containing protein EP364R (366 aa).

The ERCC4 domain occupies 3–101; it reads FLVADHREHH…QLYFFVEGPA (99 aa).

Belongs to the asfivirus EP364R family.

Plays a role in the inhibition of type I interferon signaling pathway. Mechanistically, specifically interacts with 2',3'-cGAMP and cleaves it via its phosphodiesterase activity. In turn, prevents 2',3'-cGAMP interaction with host ER-resident STING1 leading to inhibition of downstream signaling pathway and type I interferon production. The sequence is that of ERCC4 domain-containing protein EP364R from African swine fever virus (isolate Pig/Kenya/KEN-50/1950) (ASFV).